A 438-amino-acid chain; its full sequence is Histidinol dehydrogenase (438 aa).

Positions 138, 199, and 222 each coordinate NAD(+). 3 residues coordinate substrate: Ser245, Gln267, and His270. The Zn(2+) site is built by Gln267 and His270. Residues Glu335 and His336 each act as proton acceptor in the active site. Substrate contacts are provided by His336, Asp369, Glu423, and His428. Asp369 is a Zn(2+) binding site. His428 lines the Zn(2+) pocket.

The protein belongs to the histidinol dehydrogenase family. Requires Zn(2+) as cofactor.

It carries out the reaction L-histidinol + 2 NAD(+) + H2O = L-histidine + 2 NADH + 3 H(+). It participates in amino-acid biosynthesis; L-histidine biosynthesis; L-histidine from 5-phospho-alpha-D-ribose 1-diphosphate: step 9/9. Its function is as follows. Catalyzes the sequential NAD-dependent oxidations of L-histidinol to L-histidinaldehyde and then to L-histidine. The chain is Histidinol dehydrogenase from Burkholderia lata (strain ATCC 17760 / DSM 23089 / LMG 22485 / NCIMB 9086 / R18194 / 383).